Consider the following 320-residue polypeptide: Biotin synthase (320 aa).

The Radical SAM core domain occupies 45-274 (NDLQKASLLS…DSRIRLSAGR (230 aa)). Residues Cys60, Cys64, and Cys67 each coordinate [4Fe-4S] cluster. Positions 105, 137, 197, and 269 each coordinate [2Fe-2S] cluster.

The protein belongs to the radical SAM superfamily. Biotin synthase family. In terms of assembly, homodimer. The cofactor is [4Fe-4S] cluster. [2Fe-2S] cluster is required as a cofactor.

The enzyme catalyses (4R,5S)-dethiobiotin + (sulfur carrier)-SH + 2 reduced [2Fe-2S]-[ferredoxin] + 2 S-adenosyl-L-methionine = (sulfur carrier)-H + biotin + 2 5'-deoxyadenosine + 2 L-methionine + 2 oxidized [2Fe-2S]-[ferredoxin]. It participates in cofactor biosynthesis; biotin biosynthesis; biotin from 7,8-diaminononanoate: step 2/2. Its function is as follows. Catalyzes the conversion of dethiobiotin (DTB) to biotin by the insertion of a sulfur atom into dethiobiotin via a radical-based mechanism. This is Biotin synthase from Beijerinckia indica subsp. indica (strain ATCC 9039 / DSM 1715 / NCIMB 8712).